We begin with the raw amino-acid sequence, 550 residues long: Small ribosomal subunit protein uS3m (550 aa).

The segment at 112–133 (NDDTEEERNEVGGRGAGKRVES) is disordered.

This sequence belongs to the universal ribosomal protein uS3 family.

Its subcellular location is the mitochondrion. This chain is Small ribosomal subunit protein uS3m (RPS3), found in Oenothera berteroana (Bertero's evening primrose).